The sequence spans 155 residues: Protein SprT-like (155 aa).

The region spanning 7-145 (QRHMEEVSLQ…GSCGGKLIQT (139 aa)) is the SprT-like domain. Histidine 67 serves as a coordination point for Zn(2+). Glutamate 68 is a catalytic residue. A Zn(2+)-binding site is contributed by histidine 71.

This sequence belongs to the SprT family. The cofactor is Zn(2+).

Its subcellular location is the cytoplasm. In Listeria monocytogenes serovar 1/2a (strain ATCC BAA-679 / EGD-e), this protein is Protein SprT-like.